The chain runs to 188 residues: Cytochrome b561 homolog 2 (188 aa).

Residues 1 to 15 (MSFTNTPERYGVISA) lie on the Cytoplasmic side of the membrane. The helical transmembrane segment at 16 to 36 (AFHWLSAIIVYGMFALGLWMV) threads the bilayer. 2 residues coordinate heme b: His-18 and His-52. The Periplasmic portion of the chain corresponds to 37 to 54 (TLSYYDGWYHKAPELHKS). Residues 55–75 (IGILLMMGLVIRVLWRVISPP) form a helical membrane-spanning segment. Topologically, residues 76–91 (PGPLPSYSPMTRLAAR) are cytoplasmic. Residues 92-112 (AGHLALYLLLFAIGISGYLIS) form a helical membrane-spanning segment. The Periplasmic segment spans residues 113 to 143 (TADGKPISVFGWFDVPATLADAGAQADFAGA). Residues 144-164 (LHFWLAWSVVVLSVMHGFMAL) traverse the membrane as a helical segment. His-145 and His-159 together coordinate heme b. Over 165–188 (KHHFIDKDDTLKRMLGKSSSDYGV) the chain is Cytoplasmic.

Belongs to the cytochrome b561 family. Requires heme b as cofactor.

The protein localises to the cell inner membrane. This Escherichia coli (strain K12) protein is Cytochrome b561 homolog 2 (yceJ).